The sequence spans 2637 residues: Nonribisomal peptide synthetase valB (2637 aa).

Residues 1–376 (MADGADYTQR…KALIRSPPST (376 aa)) are condensation 1. Residues 413-803 (SQASRRPDAA…VGRRDNQIKL (391 aa)) form an adenylation 1 region. In terms of domain architecture, Carrier 1 spans 946–1022 (PPANPPERAL…EAASEIKEPT (77 aa)). Ser983 carries the post-translational modification O-(pantetheine 4'-phosphoryl)serine. Residues 1016-1045 (SEIKEPTDASAPSPSPISRDLPLQKSNHDR) are disordered. The segment at 1063-1506 (VEAIYPCTAL…LSRADMSLLQ (444 aa)) is condensation 2. The adenylation 2 stretch occupies residues 1524–1933 (AREVAHQRPL…EGRKDTRVKL (410 aa)). Positions 2078 to 2154 (KEVTDDQAFM…YMVSKTSVSN (77 aa)) constitute a Carrier 2 domain. At Ser2115 the chain carries O-(pantetheine 4'-phosphoryl)serine. Positions 2193–2582 (ESVAPATDAQ…LWMGAYLDAA (390 aa)) are condensation 3.

Belongs to the NRP synthetase family.

It functions in the pathway secondary metabolite biosynthesis. In terms of biological role, nonribisomal peptide synthetase; part of the gene cluster that mediates the biosynthesis of valactamides. The first step of the pathway is performed by the highly reducing polyketide synthase valA that produces the polyketide part of the final products. An acetyl starter unit is incorporated by the ketosynthase domain of valA, and subsequently 6 malonyl-CoA-derived ketide units are incorporated and fully reduced to their respective alkane forms by the action of the ketoreductase, dehydratase, and enoylreductase domains (except for the penultimate unit, which is reduced only to the alkene). The final five ketide units are each proposed to be alpha-methylated by the methyltransferase domain before ketone reduction by the ketoreductase domain. The C1 domain of the nonribisomal peptide synthetase valB then catalyzes amide bond formation between the heptaketide chain and L-valine (L-Val) attached to the T1 domain. The C2 domain incorporating L-isoleucine (L-Ile) then carries out chain elongation, which is followed by macrolactonization by the Ct domain to release the final product. The sequence is that of Nonribisomal peptide synthetase valB from Aspergillus terreus.